The following is a 600-amino-acid chain: tRNA uridine 5-carboxymethylaminomethyl modification enzyme MnmG (600 aa).

An FAD-binding site is contributed by 10–15 (GGGHAG). The disordered stretch occupies residues 216 to 239 (ADPQPRGFTGTPGPRAAESPTWQT). 267 to 281 (GPRYCPSIEDKVVKF) serves as a coordination point for NAD(+).

This sequence belongs to the MnmG family. Homodimer. Heterotetramer of two MnmE and two MnmG subunits. FAD serves as cofactor.

The protein localises to the cytoplasm. NAD-binding protein involved in the addition of a carboxymethylaminomethyl (cmnm) group at the wobble position (U34) of certain tRNAs, forming tRNA-cmnm(5)s(2)U34. The chain is tRNA uridine 5-carboxymethylaminomethyl modification enzyme MnmG from Deinococcus radiodurans (strain ATCC 13939 / DSM 20539 / JCM 16871 / CCUG 27074 / LMG 4051 / NBRC 15346 / NCIMB 9279 / VKM B-1422 / R1).